The primary structure comprises 334 residues: DNA-directed RNA polymerase subunit alpha (334 aa).

Residues 1–232 (MVREEIAVST…IDLFIPFLHA (232 aa)) form an alpha N-terminal domain (alpha-NTD) region. The interval 268-334 (GIALKCIFID…ILQKHFTIDC (67 aa)) is alpha C-terminal domain (alpha-CTD).

This sequence belongs to the RNA polymerase alpha chain family. As to quaternary structure, in plastids the minimal PEP RNA polymerase catalytic core is composed of four subunits: alpha, beta, beta', and beta''. When a (nuclear-encoded) sigma factor is associated with the core the holoenzyme is formed, which can initiate transcription.

Its subcellular location is the plastid. It is found in the chloroplast. It catalyses the reaction RNA(n) + a ribonucleoside 5'-triphosphate = RNA(n+1) + diphosphate. Functionally, DNA-dependent RNA polymerase catalyzes the transcription of DNA into RNA using the four ribonucleoside triphosphates as substrates. This chain is DNA-directed RNA polymerase subunit alpha, found in Chloranthus spicatus (Chulantree).